We begin with the raw amino-acid sequence, 1408 residues long: DNA-directed RNA polymerase subunit beta (1408 aa).

The tract at residues 1383–1408 (PERQRSFGGDFLGGGDGEERKTGTEA) is disordered. Residues 1399-1408 (GEERKTGTEA) are compositionally biased toward basic and acidic residues.

It belongs to the RNA polymerase beta chain family. The RNAP catalytic core consists of 2 alpha, 1 beta, 1 beta' and 1 omega subunit. When a sigma factor is associated with the core the holoenzyme is formed, which can initiate transcription.

It catalyses the reaction RNA(n) + a ribonucleoside 5'-triphosphate = RNA(n+1) + diphosphate. Its function is as follows. DNA-dependent RNA polymerase catalyzes the transcription of DNA into RNA using the four ribonucleoside triphosphates as substrates. This is DNA-directed RNA polymerase subunit beta from Myxococcus xanthus (strain DK1622).